Consider the following 204-residue polypeptide: Urease accessory protein UreG (204 aa).

11–18 is a binding site for GTP; sequence GPVGAGKT.

The protein belongs to the SIMIBI class G3E GTPase family. UreG subfamily. Homodimer. UreD, UreF and UreG form a complex that acts as a GTP-hydrolysis-dependent molecular chaperone, activating the urease apoprotein by helping to assemble the nickel containing metallocenter of UreC. The UreE protein probably delivers the nickel.

The protein resides in the cytoplasm. Its function is as follows. Facilitates the functional incorporation of the urease nickel metallocenter. This process requires GTP hydrolysis, probably effectuated by UreG. This chain is Urease accessory protein UreG, found in Staphylococcus epidermidis (strain ATCC 35984 / DSM 28319 / BCRC 17069 / CCUG 31568 / BM 3577 / RP62A).